The sequence spans 79 residues: uncharacterized protein (79 aa).

A coiled-coil region spans residues 4-43 (QENEDLRKQLVEASELLKSQAKELKDAHQQQKLALQDFLE).

This is an uncharacterized protein from Homo sapiens (Human).